We begin with the raw amino-acid sequence, 269 residues long: Hydroxyacylglutathione hydrolase (269 aa).

Residues H56, H58, D60, H61, H115, D137, and H177 each coordinate Zn(2+).

The protein belongs to the metallo-beta-lactamase superfamily. Glyoxalase II family. Monomer. The cofactor is Zn(2+).

The catalysed reaction is an S-(2-hydroxyacyl)glutathione + H2O = a 2-hydroxy carboxylate + glutathione + H(+). It functions in the pathway secondary metabolite metabolism; methylglyoxal degradation; (R)-lactate from methylglyoxal: step 2/2. Thiolesterase that catalyzes the hydrolysis of S-D-lactoyl-glutathione to form glutathione and D-lactic acid. This chain is Hydroxyacylglutathione hydrolase, found in Leptospira borgpetersenii serovar Hardjo-bovis (strain JB197).